A 1256-amino-acid chain; its full sequence is Bifunctional autolysin (1256 aa).

The N-terminal stretch at 1–29 (MAKKFNYKLPSMVALTLVGSAVTAHQVQA) is a signal peptide. Over residues 103 to 138 (GDTRANQSATTNNTQPVAKSTSTTAPKTNTNVTNAG) the composition is skewed to polar residues. Disordered regions lie at residues 103-151 (GDTR…NSEN), 172-219 (KTAA…KYKP), and 419-440 (TQST…PSTG). 2 stretches are compositionally biased toward low complexity: residues 172 to 196 (KTAA…KVTT) and 421 to 439 (STTT…KPST). Residues 199–775 (ASAQPRSVAA…AVAQPKTAVK (577 aa)) are N-acetylmuramoyl-L-alanine amidase. GW domains are found at residues 443–517 (TVAA…YNTA), 519–593 (SPVN…DTAK), 612–686 (TVSS…YNNA), 688–762 (SPVN…VPAA), 784–859 (TTQT…VQNL), 861–936 (KEVK…APTA), and 943–1017 (AAKD…KELI). The segment at 776-1256 (AYTVTKPQTT…GKYFDIPQYK (481 aa)) is endo-beta-N-acetylglucosaminidase.

It in the N-terminal section; belongs to the N-acetylmuramoyl-L-alanine amidase 2 family. In the C-terminal section; belongs to the glycosyl hydrolase 73 family. In terms of assembly, oligomer; forms a ring structure at the cell surface which is important for efficient partitioning of daughter cells after cell division. Undergoes proteolytic processing to generate the two extracellular lytic enzymes, probably at the septal region on the cell surface.

The protein localises to the secreted. It catalyses the reaction Hydrolyzes the link between N-acetylmuramoyl residues and L-amino acid residues in certain cell-wall glycopeptides.. The catalysed reaction is an N(4)-(oligosaccharide-(1-&gt;3)-[oligosaccharide-(1-&gt;6)]-beta-D-Man-(1-&gt;4)-beta-D-GlcNAc-(1-&gt;4)-alpha-D-GlcNAc)-L-asparaginyl-[protein] + H2O = an oligosaccharide-(1-&gt;3)-[oligosaccharide-(1-&gt;6)]-beta-D-Man-(1-&gt;4)-D-GlcNAc + N(4)-(N-acetyl-beta-D-glucosaminyl)-L-asparaginyl-[protein]. In terms of biological role, endohydrolysis of the di-N-acetylchitobiosyl unit in high-mannose glycopeptides and glycoproteins containing the -[(Man)5(GlcNAc)2]-Asn structure. One N-acetyl-D-glucosamine residue remains attached to the protein; the rest of the oligosaccharide is released intact. Cleaves the peptidoglycan connecting the daughter cells at the end of the cell division cycle, resulting in the separation of the two newly divided cells. Acts as an autolysin in penicillin-induced lysis. The polypeptide is Bifunctional autolysin (atl) (Staphylococcus aureus (strain COL)).